Reading from the N-terminus, the 156-residue chain is Persephin (156 aa).

The N-terminal stretch at 1 to 21 (MAAGRLRILCLLLLSLHPSLG) is a signal peptide. 3 disulfides stabilise this stretch: C66/C124, C93/C152, and C97/C154.

Belongs to the TGF-beta family. GDNF subfamily. Homodimer; disulfide-linked. Interacts with GFRA4 coreceptor and RET: forms a 2:2:2 ternary complex composed of PSPN ligand, GFRA4 and RET receptor.

The protein localises to the secreted. Growth factor that exhibits neurotrophic activity on mesencephalic dopaminergic and motor neurons. Acts by binding to its coreceptor, GFRA4, leading to autophosphorylation and activation of the RET receptor. The sequence is that of Persephin from Mus musculus (Mouse).